A 242-amino-acid polypeptide reads, in one-letter code: UDP-2,3-diacylglucosamine hydrolase (242 aa).

Mn(2+) is bound by residues aspartate 8, histidine 10, aspartate 41, asparagine 79, and histidine 114. A substrate-binding site is contributed by asparagine 79–arginine 80. The substrate site is built by aspartate 122, lysine 164, lysine 167, and histidine 195. Histidine 195 and histidine 197 together coordinate Mn(2+).

The protein belongs to the LpxH family. It depends on Mn(2+) as a cofactor.

The protein localises to the cell inner membrane. It catalyses the reaction UDP-2-N,3-O-bis[(3R)-3-hydroxytetradecanoyl]-alpha-D-glucosamine + H2O = 2-N,3-O-bis[(3R)-3-hydroxytetradecanoyl]-alpha-D-glucosaminyl 1-phosphate + UMP + 2 H(+). The protein operates within glycolipid biosynthesis; lipid IV(A) biosynthesis; lipid IV(A) from (3R)-3-hydroxytetradecanoyl-[acyl-carrier-protein] and UDP-N-acetyl-alpha-D-glucosamine: step 4/6. Its function is as follows. Hydrolyzes the pyrophosphate bond of UDP-2,3-diacylglucosamine to yield 2,3-diacylglucosamine 1-phosphate (lipid X) and UMP by catalyzing the attack of water at the alpha-P atom. Involved in the biosynthesis of lipid A, a phosphorylated glycolipid that anchors the lipopolysaccharide to the outer membrane of the cell. In Vibrio parahaemolyticus serotype O3:K6 (strain RIMD 2210633), this protein is UDP-2,3-diacylglucosamine hydrolase.